Consider the following 495-residue polypeptide: UDP-N-acetylmuramoyl-L-alanyl-D-glutamate--2,6-diaminopimelate ligase (495 aa).

UDP-N-acetyl-alpha-D-muramoyl-L-alanyl-D-glutamate-binding positions include leucine 27, serine 29, and 44-46 (HQA). An ATP-binding site is contributed by 116–122 (GTNGKTT). UDP-N-acetyl-alpha-D-muramoyl-L-alanyl-D-glutamate is bound by residues asparagine 157, 158 to 159 (TT), serine 185, glutamine 191, and arginine 193. An N6-carboxylysine modification is found at lysine 225. Meso-2,6-diaminopimelate-binding positions include arginine 390, 414 to 417 (DNPR), glycine 465, and glutamate 469. Positions 414–417 (DNPR) match the Meso-diaminopimelate recognition motif motif.

This sequence belongs to the MurCDEF family. MurE subfamily. The cofactor is Mg(2+). Post-translationally, carboxylation is probably crucial for Mg(2+) binding and, consequently, for the gamma-phosphate positioning of ATP.

It localises to the cytoplasm. It catalyses the reaction UDP-N-acetyl-alpha-D-muramoyl-L-alanyl-D-glutamate + meso-2,6-diaminopimelate + ATP = UDP-N-acetyl-alpha-D-muramoyl-L-alanyl-gamma-D-glutamyl-meso-2,6-diaminopimelate + ADP + phosphate + H(+). It functions in the pathway cell wall biogenesis; peptidoglycan biosynthesis. Functionally, catalyzes the addition of meso-diaminopimelic acid to the nucleotide precursor UDP-N-acetylmuramoyl-L-alanyl-D-glutamate (UMAG) in the biosynthesis of bacterial cell-wall peptidoglycan. This is UDP-N-acetylmuramoyl-L-alanyl-D-glutamate--2,6-diaminopimelate ligase from Escherichia coli O6:H1 (strain CFT073 / ATCC 700928 / UPEC).